A 60-amino-acid polypeptide reads, in one-letter code: Cytotoxin 2 (60 aa).

Disulfide bonds link Cys3–Cys21, Cys14–Cys38, Cys42–Cys53, and Cys54–Cys59.

It belongs to the three-finger toxin family. Short-chain subfamily. Type IA cytotoxin sub-subfamily. As to quaternary structure, monomer, or heterodimer with alpha-cobratoxin (AC P01391); disulfide-linked. As to expression, expressed by the venom gland.

It localises to the secreted. The protein localises to the target cell membrane. Functionally, monomer: shows cytolytic activity. In terms of biological role, heterodimer: has no cytolytic activity, but retains most of the alpha-cobratoxin capacity to compete with alpha-bungarotoxin for binding to Torpedo and alpha-7/CHRNA7 nicotinic acetylcholine receptors (nAChRs) as well as to Lymnea stagnalis acetylcholine-binding protein. The protein is Cytotoxin 2 of Naja kaouthia (Monocled cobra).